A 930-amino-acid polypeptide reads, in one-letter code: Isoleucine--tRNA ligase (930 aa).

Residues 57–67 (PYANGHLHLGH) carry the 'HIGH' region motif. Position 555 (E555) interacts with L-isoleucyl-5'-AMP. The short motif at 596 to 600 (KMSKS) is the 'KMSKS' region element. K599 serves as a coordination point for ATP. C896, C899, C916, and C919 together coordinate Zn(2+).

This sequence belongs to the class-I aminoacyl-tRNA synthetase family. IleS type 1 subfamily. Monomer. The cofactor is Zn(2+).

It localises to the cytoplasm. The catalysed reaction is tRNA(Ile) + L-isoleucine + ATP = L-isoleucyl-tRNA(Ile) + AMP + diphosphate. Catalyzes the attachment of isoleucine to tRNA(Ile). As IleRS can inadvertently accommodate and process structurally similar amino acids such as valine, to avoid such errors it has two additional distinct tRNA(Ile)-dependent editing activities. One activity is designated as 'pretransfer' editing and involves the hydrolysis of activated Val-AMP. The other activity is designated 'posttransfer' editing and involves deacylation of mischarged Val-tRNA(Ile). The polypeptide is Isoleucine--tRNA ligase (Moorella thermoacetica (strain ATCC 39073 / JCM 9320)).